The primary structure comprises 87 residues: Small ribosomal subunit protein uS17 (87 aa).

It belongs to the universal ribosomal protein uS17 family. As to quaternary structure, part of the 30S ribosomal subunit.

One of the primary rRNA binding proteins, it binds specifically to the 5'-end of 16S ribosomal RNA. In Geobacillus sp. (strain WCH70), this protein is Small ribosomal subunit protein uS17.